A 362-amino-acid chain; its full sequence is 3-dehydroquinate synthase (362 aa).

NAD(+) is bound by residues 70-75 (EGEQYK), 104-108 (GVIGD), 128-129 (TT), Lys141, Lys150, and 168-171 (TLTT). 3 residues coordinate Zn(2+): Glu183, His246, and His263.

The protein belongs to the sugar phosphate cyclases superfamily. Dehydroquinate synthase family. The cofactor is Co(2+). It depends on Zn(2+) as a cofactor. NAD(+) serves as cofactor.

It is found in the cytoplasm. The enzyme catalyses 7-phospho-2-dehydro-3-deoxy-D-arabino-heptonate = 3-dehydroquinate + phosphate. It participates in metabolic intermediate biosynthesis; chorismate biosynthesis; chorismate from D-erythrose 4-phosphate and phosphoenolpyruvate: step 2/7. Functionally, catalyzes the conversion of 3-deoxy-D-arabino-heptulosonate 7-phosphate (DAHP) to dehydroquinate (DHQ). The protein is 3-dehydroquinate synthase of Histophilus somni (strain 2336) (Haemophilus somnus).